Consider the following 427-residue polypeptide: Enolase (427 aa).

Q163 provides a ligand contact to (2R)-2-phosphoglycerate. E205 acts as the Proton donor in catalysis. Positions 242, 285, and 312 each coordinate Mg(2+). K337, R366, S367, and K388 together coordinate (2R)-2-phosphoglycerate. The active-site Proton acceptor is the K337.

It belongs to the enolase family. Requires Mg(2+) as cofactor.

The protein localises to the cytoplasm. The protein resides in the secreted. It localises to the cell surface. It catalyses the reaction (2R)-2-phosphoglycerate = phosphoenolpyruvate + H2O. It participates in carbohydrate degradation; glycolysis; pyruvate from D-glyceraldehyde 3-phosphate: step 4/5. Functionally, catalyzes the reversible conversion of 2-phosphoglycerate (2-PG) into phosphoenolpyruvate (PEP). It is essential for the degradation of carbohydrates via glycolysis. The protein is Enolase of Ralstonia pickettii (strain 12J).